The sequence spans 406 residues: Pyruvate dehydrogenase E1 component subunit beta-2, chloroplastic (406 aa).

The transit peptide at 1-44 (MSSIIHGAGAATTTLSTFNSVDSKKLFVAPSRTNLSVRSQRYIV) directs the protein to the chloroplast. Glu-142 lines the thiamine diphosphate pocket. The K(+) site is built by Val-195, Ala-243, Ile-244, and Asn-248.

As to quaternary structure, tetramer of 2 alpha and 2 beta subunits. The cofactor is thiamine diphosphate.

It is found in the plastid. It localises to the chloroplast. It catalyses the reaction N(6)-[(R)-lipoyl]-L-lysyl-[protein] + pyruvate + H(+) = N(6)-[(R)-S(8)-acetyldihydrolipoyl]-L-lysyl-[protein] + CO2. Its function is as follows. The pyruvate dehydrogenase complex catalyzes the overall conversion of pyruvate to acetyl-CoA and CO(2). It contains multiple copies of three enzymatic components: pyruvate dehydrogenase (E1), dihydrolipoamide acetyltransferase (E2) and lipoamide dehydrogenase (E3). This is Pyruvate dehydrogenase E1 component subunit beta-2, chloroplastic (PDH-E1 BETA) from Arabidopsis thaliana (Mouse-ear cress).